The primary structure comprises 704 residues: Penicillin-binding protein H (704 aa).

The chain crosses the membrane as a helical span at residues 23–43 (FFLAVFVLFTALIFKLGVVQI). The tract at residues 197 to 223 (MNPNKSNSNGKNGALLDEKKNSSQRPK) is disordered. Over residues 200 to 209 (NKSNSNGKNG) the composition is skewed to low complexity. The segment covering 212-223 (LDEKKNSSQRPK) has biased composition (basic and acidic residues). The Acyl-ester intermediate role is filled by Ser415.

This sequence belongs to the transpeptidase family.

It localises to the cell membrane. It catalyses the reaction Preferential cleavage: (Ac)2-L-Lys-D-Ala-|-D-Ala. Also transpeptidation of peptidyl-alanyl moieties that are N-acyl substituents of D-alanine.. The protein operates within cell wall biogenesis; peptidoglycan biosynthesis. Involved in the polymerization of peptidoglycan. Plays a redundant role with PBP-2A (pbpA) in determining the rod shape of the cell during vegetative growth and spore outgrowth. The protein is Penicillin-binding protein H of Bacillus subtilis (strain 168).